The chain runs to 126 residues: Large ribosomal subunit protein bL12 (126 aa).

Belongs to the bacterial ribosomal protein bL12 family. Homodimer. Part of the ribosomal stalk of the 50S ribosomal subunit. Forms a multimeric L10(L12)X complex, where L10 forms an elongated spine to which 2 to 4 L12 dimers bind in a sequential fashion. Binds GTP-bound translation factors.

In terms of biological role, forms part of the ribosomal stalk which helps the ribosome interact with GTP-bound translation factors. Is thus essential for accurate translation. In Acidovorax sp. (strain JS42), this protein is Large ribosomal subunit protein bL12.